The sequence spans 270 residues: 3-phenylpropionate-dihydrodiol/cinnamic acid-dihydrodiol dehydrogenase (270 aa).

10–34 (FITGGGSGLGLALVERFIEEGAQVA) contributes to the NAD(+) binding site. Substrate is bound at residue S143. Catalysis depends on Y156, which acts as the Proton acceptor.

Belongs to the short-chain dehydrogenases/reductases (SDR) family.

The enzyme catalyses 3-(cis-5,6-dihydroxycyclohexa-1,3-dien-1-yl)propanoate + NAD(+) = 3-(2,3-dihydroxyphenyl)propanoate + NADH + H(+). It carries out the reaction (2E)-3-(cis-5,6-dihydroxycyclohexa-1,3-dien-1-yl)prop-2-enoate + NAD(+) = (2E)-3-(2,3-dihydroxyphenyl)prop-2-enoate + NADH + H(+). It participates in aromatic compound metabolism; 3-phenylpropanoate degradation. Converts 3-phenylpropionate-dihydrodiol (PP-dihydrodiol) and cinnamic acid-dihydrodiol (CI-dihydrodiol) into 3-(2,3-dihydroxylphenyl)propanoic acid (DHPP) and 2,3-dihydroxicinnamic acid (DHCI), respectively. The sequence is that of 3-phenylpropionate-dihydrodiol/cinnamic acid-dihydrodiol dehydrogenase from Escherichia coli (strain SMS-3-5 / SECEC).